Reading from the N-terminus, the 429-residue chain is MSAIVDIIGREVLDSRGNPTVECDVLLESGVMGRAAVPSGASTGSREAIELRDGDKSRYLGKGVLKAVEHINTEISEAIMGLDASEQAFLDRTLIELDGTENKGRLGANAMLAVSMAVAKAAAEEAGLPLYRYFGGSGAMQMPVPMMNIVNGGAHANNSLDIQEFMIMPVSQTSFREALRCGAEVFHALKKILSDKGMSTAVGDEGGFAPNFSSNEECLNTVVQAIEKAGYKAGEDVLLALDCAASEFYHEAEGVYSLEGEGLKLTSTQFADYLANLCDKFPIVSIEDGMAEGDWEGWKTLTDKLGKRVQLVGDDLFVTNTKILKEGIEKGIGNSILIKINQIGTLTETFAAIEMAKRAGYTAVISHRSGETEDSTIADIAVGTNAGQIKTGSLSRSDRISKYNQLLRIEEDLGDIATYPGKSTFYNLR.

Glutamine 163 contributes to the (2R)-2-phosphoglycerate binding site. Glutamate 205 functions as the Proton donor in the catalytic mechanism. 3 residues coordinate Mg(2+): aspartate 242, glutamate 287, and aspartate 314. (2R)-2-phosphoglycerate-binding residues include lysine 339, arginine 368, serine 369, and lysine 390. Lysine 339 acts as the Proton acceptor in catalysis.

The protein belongs to the enolase family. Mg(2+) serves as cofactor.

The protein localises to the cytoplasm. It is found in the secreted. Its subcellular location is the cell surface. The catalysed reaction is (2R)-2-phosphoglycerate = phosphoenolpyruvate + H2O. The protein operates within carbohydrate degradation; glycolysis; pyruvate from D-glyceraldehyde 3-phosphate: step 4/5. In terms of biological role, catalyzes the reversible conversion of 2-phosphoglycerate (2-PG) into phosphoenolpyruvate (PEP). It is essential for the degradation of carbohydrates via glycolysis. The polypeptide is Enolase 1 (Cupriavidus metallidurans (strain ATCC 43123 / DSM 2839 / NBRC 102507 / CH34) (Ralstonia metallidurans)).